We begin with the raw amino-acid sequence, 156 residues long: Small ribosomal subunit protein uS7 (156 aa).

It belongs to the universal ribosomal protein uS7 family. In terms of assembly, part of the 30S ribosomal subunit. Contacts proteins S9 and S11.

In terms of biological role, one of the primary rRNA binding proteins, it binds directly to 16S rRNA where it nucleates assembly of the head domain of the 30S subunit. Is located at the subunit interface close to the decoding center, probably blocks exit of the E-site tRNA. In Maricaulis maris (strain MCS10) (Caulobacter maris), this protein is Small ribosomal subunit protein uS7.